The sequence spans 505 residues: Cytochrome P450 52C1 (505 aa).

The chain crosses the membrane as a helical span at residues 4-21 (LFCFLAGIIVVYKAAQYY). Cys453 is a heme binding site.

Belongs to the cytochrome P450 family. The cofactor is heme.

The protein localises to the membrane. Its function is as follows. Together with an NADPH cytochrome P450 the enzyme system catalyzes the terminal hydroxylation as the first step in the assimilation of alkanes and fatty acids. This is Cytochrome P450 52C1 (CYP52C1) from Candida tropicalis (Yeast).